The primary structure comprises 82 residues: Large ribosomal subunit protein bL31B-2 (82 aa).

Belongs to the bacterial ribosomal protein bL31 family. Type B subfamily. Part of the 50S ribosomal subunit.

In Streptomyces avermitilis (strain ATCC 31267 / DSM 46492 / JCM 5070 / NBRC 14893 / NCIMB 12804 / NRRL 8165 / MA-4680), this protein is Large ribosomal subunit protein bL31B-2.